The sequence spans 560 residues: Eukaryotic translation initiation factor 3 subunit D-1 (560 aa).

A disordered region spans residues 98–166 (VQKPPHQRGR…RGPPPKMRES (69 aa)). Residues 100 to 121 (KPPHQRGRFRNMRNSRSGRGRN) are compositionally biased toward basic residues. Threonine 128 carries the phosphothreonine modification. Positions 147–156 (GRGMGKKFGH) are enriched in basic residues. Residues 291–305 (EFDLLTVNESSVEPP) are RNA gate.

The protein belongs to the eIF-3 subunit D family. In terms of assembly, component of the eukaryotic translation initiation factor 3 (eIF-3) complex. The eIF-3 complex interacts with pix.

Its subcellular location is the cytoplasm. MRNA cap-binding component of the eukaryotic translation initiation factor 3 (eIF-3) complex, which is involved in protein synthesis of a specialized repertoire of mRNAs and, together with other initiation factors, stimulates binding of mRNA and methionyl-tRNAi to the 40S ribosome. The eIF-3 complex specifically targets and initiates translation of a subset of mRNAs involved in cell proliferation. In the eIF-3 complex, eif3d specifically recognizes and binds the 7-methylguanosine cap of a subset of mRNAs. In Drosophila sechellia (Fruit fly), this protein is Eukaryotic translation initiation factor 3 subunit D-1.